A 208-amino-acid polypeptide reads, in one-letter code: Porimin (208 aa).

Positions 1–26 are cleaved as a signal peptide; sequence MGLGARGAWAALLLGTLQVLALLGAA. At 27 to 166 the chain is on the extracellular side; that stretch reads HESAAMAASA…EAKKGSKFDT (140 aa). The segment covering 42–57 has biased composition (polar residues); the sequence is GLPHNSSANSTETLQH. Positions 42–125 are disordered; that stretch reads GLPHNSSANS…PKTTSVSQNT (84 aa). Asn46, Asn50, Asn64, Asn68, Asn83, Asn96, and Asn106 each carry an N-linked (GlcNAc...) asparagine glycan. Residues 65–107 show a composition bias toward polar residues; the sequence is ETSNSTVKPPTSVASDSSNTTVTTMKPTAASNTTTPGMVSTNM. The span at 108–122 shows a compositional bias: low complexity; the sequence is TSTTLKSTPKTTSVS. N-linked (GlcNAc...) asparagine glycosylation is found at Asn124 and Asn138. The chain crosses the membrane as a helical span at residues 167-187; the sequence is GSFVGGIVLTLGVLSILYIGC. The Cytoplasmic portion of the chain corresponds to 188–208; the sequence is KMYYSRRGIRYRTIDEHDAII.

This sequence belongs to the CD164 family. In terms of tissue distribution, ubiquitous. Not expressed in ovary. Expressed in keratinocytes.

Its subcellular location is the membrane. Functionally, implicated in oncotic cell death, characterized by cell swelling, organelle swelling, vacuolization and increased membrane permeability. The protein is Porimin (TMEM123) of Homo sapiens (Human).